The primary structure comprises 129 residues: Protein Turandot A1 (129 aa).

Positions 1–21 (MNSSTALMCFALLLISPLCMG) are cleaved as a signal peptide. The N-linked (GlcNAc...) asparagine glycan is linked to asparagine 49.

Belongs to the Turandot family.

Its subcellular location is the secreted. Functionally, a humoral factor that plays a role in stress tolerance; gives increased resistance to the lethal effects of bacterial challenge and stress. Regulated by the JAK/STAT pathway and NF-KB-like Relish pathway in the fat body, upd3 in the hemocytes and Mekk1 in response to septic injury and consequent immune response. This is Protein Turandot A1 (TotA1) from Drosophila simulans (Fruit fly).